A 343-amino-acid chain; its full sequence is MESGRLIFSTAGSGAGQMLFLDCGAGGGGVGGGAMFHRGARPVLGMEEGGRGVKRPFFTTPDELLEEEYYDEQLPEKKRRLTPEQVHLLERSFEEENKLEPERKTELARKLGLQPRQVAVWFQNRRARWKTKQLERDFDRLKASFDALRADHDALLQDNHRLHSQVMSLTEKLQEKETTTEGSAGAAVDVPGLPAAADVKVAVPDAEEPALEEAAAAFEEQQEQQVKAEDRLSTGSGGSAVVDTDAQLVVGCGRQHLAAVDSSVESYFPGGDEYHDCVMGPMDHAAGGIQSEEDDGAGSDEGCSYYADDAGVLFADHGHHHHHQHADDDEEDGQQISCWWMWN.

A DNA-binding region (homeobox) is located at residues Leu74–Gln133. The segment at Lys132–Lys176 is leucine-zipper. The tract at residues Phe218–Ser239 is disordered.

Belongs to the HD-ZIP homeobox family. Class I subfamily. Expressed in seedlings, stems, leaf sheaths and blades and panicles.

The protein localises to the nucleus. Its function is as follows. Probable transcription factor. The chain is Homeobox-leucine zipper protein HOX16 (HOX16) from Oryza sativa subsp. japonica (Rice).